Reading from the N-terminus, the 140-residue chain is ATP synthase epsilon chain (140 aa).

This sequence belongs to the ATPase epsilon chain family. In terms of assembly, F-type ATPases have 2 components, CF(1) - the catalytic core - and CF(0) - the membrane proton channel. CF(1) has five subunits: alpha(3), beta(3), gamma(1), delta(1), epsilon(1). CF(0) has three main subunits: a, b and c.

The protein localises to the cell inner membrane. In terms of biological role, produces ATP from ADP in the presence of a proton gradient across the membrane. In Colwellia psychrerythraea (strain 34H / ATCC BAA-681) (Vibrio psychroerythus), this protein is ATP synthase epsilon chain.